The chain runs to 361 residues: Phosphoserine aminotransferase (361 aa).

L-glutamate is bound by residues S9 and R42. Pyridoxal 5'-phosphate is bound by residues 76–77 (GR), W102, T153, D173, and Q196. The residue at position 197 (K197) is an N6-(pyridoxal phosphate)lysine. 238–239 (NT) contributes to the pyridoxal 5'-phosphate binding site.

Belongs to the class-V pyridoxal-phosphate-dependent aminotransferase family. SerC subfamily. Homodimer. Pyridoxal 5'-phosphate serves as cofactor.

It localises to the cytoplasm. The enzyme catalyses O-phospho-L-serine + 2-oxoglutarate = 3-phosphooxypyruvate + L-glutamate. The catalysed reaction is 4-(phosphooxy)-L-threonine + 2-oxoglutarate = (R)-3-hydroxy-2-oxo-4-phosphooxybutanoate + L-glutamate. It participates in amino-acid biosynthesis; L-serine biosynthesis; L-serine from 3-phospho-D-glycerate: step 2/3. The protein operates within cofactor biosynthesis; pyridoxine 5'-phosphate biosynthesis; pyridoxine 5'-phosphate from D-erythrose 4-phosphate: step 3/5. Functionally, catalyzes the reversible conversion of 3-phosphohydroxypyruvate to phosphoserine and of 3-hydroxy-2-oxo-4-phosphonooxybutanoate to phosphohydroxythreonine. The polypeptide is Phosphoserine aminotransferase (Cronobacter sakazakii (strain ATCC BAA-894) (Enterobacter sakazakii)).